The following is a 282-amino-acid chain: Acetyl-coenzyme A carboxylase carboxyl transferase subunit beta (282 aa).

In terms of domain architecture, CoA carboxyltransferase N-terminal spans 25-282 (VWRKCPHCNE…SQMLRIFMKQ (258 aa)). Residues Cys-29, Cys-32, Cys-48, and Cys-51 each coordinate Zn(2+). Residues 29 to 51 (CPHCNEIIYAKEIERNLNVCPKC) form a C4-type zinc finger.

Belongs to the AccD/PCCB family. In terms of assembly, acetyl-CoA carboxylase is a heterohexamer composed of biotin carboxyl carrier protein (AccB), biotin carboxylase (AccC) and two subunits each of ACCase subunit alpha (AccA) and ACCase subunit beta (AccD). The cofactor is Zn(2+).

The protein localises to the cytoplasm. It catalyses the reaction N(6)-carboxybiotinyl-L-lysyl-[protein] + acetyl-CoA = N(6)-biotinyl-L-lysyl-[protein] + malonyl-CoA. Its pathway is lipid metabolism; malonyl-CoA biosynthesis; malonyl-CoA from acetyl-CoA: step 1/1. Functionally, component of the acetyl coenzyme A carboxylase (ACC) complex. Biotin carboxylase (BC) catalyzes the carboxylation of biotin on its carrier protein (BCCP) and then the CO(2) group is transferred by the transcarboxylase to acetyl-CoA to form malonyl-CoA. In Syntrophotalea carbinolica (strain DSM 2380 / NBRC 103641 / GraBd1) (Pelobacter carbinolicus), this protein is Acetyl-coenzyme A carboxylase carboxyl transferase subunit beta.